The chain runs to 738 residues: 1,4-alpha-glucan branching enzyme GlgB (738 aa).

The Nucleophile role is filled by D417. E472 functions as the Proton donor in the catalytic mechanism.

It belongs to the glycosyl hydrolase 13 family. GlgB subfamily. Monomer.

It carries out the reaction Transfers a segment of a (1-&gt;4)-alpha-D-glucan chain to a primary hydroxy group in a similar glucan chain.. It functions in the pathway glycan biosynthesis; glycogen biosynthesis. Its function is as follows. Catalyzes the formation of the alpha-1,6-glucosidic linkages in glycogen by scission of a 1,4-alpha-linked oligosaccharide from growing alpha-1,4-glucan chains and the subsequent attachment of the oligosaccharide to the alpha-1,6 position. This chain is 1,4-alpha-glucan branching enzyme GlgB, found in Burkholderia pseudomallei (strain K96243).